A 26-amino-acid polypeptide reads, in one-letter code: Halocyntin (26 aa).

Its function is as follows. Has strong antibacterial activity against the Gram-positive bacteria M.luteus, S.aureus, B.megaterium, A.viridans and E.faecalis, and against the Gram-negative bacterium K.pneumoniae. Has less potent antibacterial activity against the Gram-negative bacteria E.coli DH5alpha, S.typhimurium, P.aeruginosa, E.aerogenes and N.gonorrhoeae. Has moderate hemolytic activity against sheep erythrocytes. The chain is Halocyntin from Halocynthia papillosa (Red sea-squirt).